Reading from the N-terminus, the 3564-residue chain is Sushi, von Willebrand factor type A, EGF and pentraxin domain-containing protein 1 (3564 aa).

A signal peptide spans 1–17; it reads MWTRLAFCCWALALVSG. In terms of domain architecture, VWFA spans 84–265; that stretch reads ELVFLVDESS…LARRALHEDL (182 aa). N187 carries N-linked (GlcNAc...) asparagine glycosylation. Sushi domains follow at residues 377–436, 437–496, and 497–561; these read VHCP…FCRV, RTCP…RCVE, and RHCA…VCKD. 6 cysteine pairs are disulfide-bonded: C379/C421, C407/C434, C439/C481, C467/C494, C499/C544, and C530/C559. HYR domains follow at residues 560–644 and 645–724; these read KDVE…KVID and VEPP…VIKG. Residues 725–789 enclose the Sushi 4 domain; sequence SPCEVPFTPV…YSTEWPDCAI (65 aa). 20 disulfides stabilise this stretch: C727–C769, C753–C787, C1192–C1203, C1197–C1212, C1214–C1223, C1230–C1241, C1235–C1250, C1252–C1261, C1268–C1279, C1273–C1288, C1290–C1299, C1306–C1317, C1311–C1326, C1328–C1337, C1344–C1355, C1349–C1364, C1366–C1375, C1382–C1393, C1387–C1402, and C1404–C1413. The region spanning 1188–1224 is the EGF-like 1 domain; it reads VFHECFLNPCHNSGTCQQLGRGYVCLCPPGYTGLKCE. Residues 1226 to 1262 form the EGF-like 2; calcium-binding domain; sequence DIDECSSLPCLNGGICRDKVGGFTCECSSGYTGQICE. Residues 1264-1300 form the EGF-like 3; calcium-binding domain; sequence NINECSSSPCLNKGTCTDGLASYRCTCVSGYVGVHCE. The EGF-like 4; calcium-binding domain occupies 1302–1338; sequence DVNECQSSPCLNNAVCKDQVGGFSCKCPPGFLGTRCE. Positions 1340-1376 constitute an EGF-like 5; calcium-binding domain; sequence NVDECLSQPCQNGATCKDGANSFRCQCPAGFTGPHCE. The 37-residue stretch at 1378–1414 folds into the EGF-like 6; calcium-binding domain; sequence NINECQSNPCRNQATCVDELNSYSCKCRPGFSGRRCE. In terms of domain architecture, Pentraxin (PTX) spans 1419-1623; the sequence is SGFNLDFEVS…VKVDSSSIFC (205 aa). Sushi domains are found at residues 1624–1682 and 1683–1740; these read SDCP…HCER and IRCG…SCLD. Intrachain disulfides connect C1626/C1667, C1653/C1680, C1685/C1725, C1711/C1738, C1744/C1756, C1750/C1765, C1767/C1778, C1784/C1824, C1810/C1837, C1842/C1882, C1868/C1895, C1900/C1940, C1926/C1953, C1958/C1998, C1984/C2011, C2016/C2056, C2042/C2073, C2078/C2121, C2107/C2136, C2141/C2181, C2167/C2194, C2199/C2240, C2226/C2254, C2259/C2299, C2285/C2313, C2318/C2358, C2344/C2371, C2376/C2417, C2403/C2430, C2435/C2475, C2461/C2488, C2493/C2533, C2519/C2546, C2551/C2591, and C2577/C2603. In terms of domain architecture, EGF-like 7; calcium-binding spans 1740–1779; it reads DVDECAVGSDCSEHASCLNTNGSYICSCKPPYTGDGKNCA. N-linked (GlcNAc...) asparagine glycosylation is present at N1760. Sushi domains lie at 1776 to 1839, 1840 to 1897, 1898 to 1955, 1956 to 2013, 2014 to 2075, 2076 to 2138, 2139 to 2196, 2197 to 2256, 2257 to 2315, 2316 to 2373, 2374 to 2432, 2433 to 2490, 2491 to 2548, and 2549 to 2605; these read KNCA…SCEA, ISCG…VCEL, VKCS…SCQL, VSCG…QCLA, VSCD…RCIA, HFCE…QCIP, VRCG…TCHP, VSCN…SCTP, LNCG…KCVP, TKCA…VCKL, VLCQ…ECVP, VECP…MCRP, IECP…SCNA, and IHCS…TCVP. The important for the interaction with integrin ITGA9:ITGB1 stretch occupies residues 2634 to 2641; that stretch reads DMMEVPYL. Sushi domains follow at residues 2659–2708, 2709–2766, 2767–2824, 2825–2882, 2883–2940, 2941–2998, 2999–3054, 3055–3112, 3113–3171, 3172–3231, 3232–3289, 3290–3347, 3348–3406, and 3407–3463; these read EESL…SCIS, IECD…RCEV, ISCS…VCLP, VDCG…SCVP, VRCP…ICKP, ATCG…SCLP, CTCS…LCEH, ADCG…TCEP, VSCG…NCSP, KTCP…SCIP, VVCG…VCRE, SRCE…LCKP, NPCP…RCEK, and ISCG…ICRA. 33 disulfide bridges follow: C2679–C2706, C2711–C2751, C2737–C2764, C2769–C2809, C2795–C2822, C2827–C2867, C2853–C2880, C2885–C2925, C2911–C2938, C2943–C2983, C2969–C2996, C3001–C3040, C3026–C3052, C3057–C3097, C3083–C3110, C3115–C3156, C3141–C3169, C3174–C3214, C3200–C3229, C3234–C3274, C3260–C3287, C3292–C3332, C3318–C3345, C3350–C3391, C3377–C3404, C3409–C3449, C3435–C3461, C3497–C3507, C3501–C3513, C3515–C3524, C3529–C3539, C3533–C3545, and C3547–C3556. EGF-like domains follow at residues 3493 to 3525 and 3526 to 3557; these read EEPI…SRCH and TATC…HDCS.

As to quaternary structure, interacts (via Sushi domain 21) with ITGA9:ITGB1; thereby inhibits Ca(2+) intracellular signaling and as a result represses vasocontraction. Interacts (via Sushi domain 21) with ITGA4:ITGB1; thereby inhibits Ca(2+) intracellular signaling and as a result represses vasocontraction. Interacts with ANGPT1 and ANGPT2. Interacts with PEAR1 (via extracellular domain). Interacts with HSPG2, TLN1, FN1, COPA, CCT2, IQGAP1, LAMC1 and NID1. Interacts (via C-terminus) with TIE1.

Its subcellular location is the secreted. It localises to the nucleus. The protein localises to the cytoplasm. The protein resides in the membrane. Functionally, required for morphological development, cell alignment and migration of lymphatic endothelial cells during embryonic development, potentially via modulation of ANGPT2-TIE1 signaling and subsequent activation of FOXC2 transcription. Required for embryonic lymphatic vascular development, via mediating the correct formation of the first lymphovenous contact site and tight association of the lymphatic endothelium with the venous endothelium. Represses PRKCA-mediated L-type voltage-gated channel Ca(2+) influx and ROCK-mediated calcium sensitivity in vascular smooth muscle cells, via its interaction with integrins, thereby inhibiting vasocontraction. Promotes platelet activation, via its interaction with PEAR1 and subsequent activation of AKT/mTOR signaling. Plays a role in epidermal development and keratinocyte differentiation, independent of cell-cell adhesion. May play a role in initial cell attachment of stromal osteogenic cells. May promote myoblast cell adhesion when in the presence of integrin ITGA9:ITGB1. The protein is Sushi, von Willebrand factor type A, EGF and pentraxin domain-containing protein 1 (Svep1) of Rattus norvegicus (Rat).